Here is a 186-residue protein sequence, read N- to C-terminus: Casparian strip membrane protein 6 (186 aa).

Residues 1 to 23 (MKAGPIELGEGKSSAPKAAVNRG) lie on the Cytoplasmic side of the membrane. Residues 24-44 (VAILDFILRILAFIGTLGSAI) traverse the membrane as a helical segment. At 45–73 (SMATTNETLPFFTQFIRFRAEYDDLPTFT) the chain is on the extracellular side. A glycan (N-linked (GlcNAc...) asparagine) is linked at asparagine 50. The chain crosses the membrane as a helical span at residues 74 to 94 (FFVVANGVVSAYLLFSLPFSI). Residues 95–106 (FNIVRSKAQNSR) lie on the Cytoplasmic side of the membrane. Residues 107 to 127 (ILLIILDTAMLGLLSAGASAA) form a helical membrane-spanning segment. The Extracellular segment spans residues 128 to 160 (AAIVYLAHQGNVRTNWSAICQQFNSFCERISGS). The N-linked (GlcNAc...) asparagine glycan is linked to asparagine 142. A helical transmembrane segment spans residues 161 to 181 (LIGSFIGVVVFILLISLSAVA). Topologically, residues 182 to 186 (LSRHK) are cytoplasmic.

It belongs to the Casparian strip membrane proteins (CASP) family. Homodimer and heterodimers.

The protein localises to the cell membrane. Its function is as follows. Regulates membrane-cell wall junctions and localized cell wall deposition. Required for establishment of the Casparian strip membrane domain (CSD) and the subsequent formation of Casparian strips, a cell wall modification of the root endodermis that determines an apoplastic barrier between the intraorganismal apoplasm and the extraorganismal apoplasm and prevents lateral diffusion. This chain is Casparian strip membrane protein 6, found in Populus trichocarpa (Western balsam poplar).